We begin with the raw amino-acid sequence, 275 residues long: Putative phosphoenolpyruvate synthase regulatory protein (275 aa).

ADP is bound at residue 153 to 160 (GVSRSGKT).

This sequence belongs to the pyruvate, phosphate/water dikinase regulatory protein family. PSRP subfamily.

The enzyme catalyses [pyruvate, water dikinase] + ADP = [pyruvate, water dikinase]-phosphate + AMP + H(+). It catalyses the reaction [pyruvate, water dikinase]-phosphate + phosphate + H(+) = [pyruvate, water dikinase] + diphosphate. In terms of biological role, bifunctional serine/threonine kinase and phosphorylase involved in the regulation of the phosphoenolpyruvate synthase (PEPS) by catalyzing its phosphorylation/dephosphorylation. This chain is Putative phosphoenolpyruvate synthase regulatory protein, found in Nitrosomonas eutropha (strain DSM 101675 / C91 / Nm57).